The primary structure comprises 220 residues: Ribosomal RNA large subunit methyltransferase E (220 aa).

Gly64, Trp66, Asp92, Asp108, and Asp133 together coordinate S-adenosyl-L-methionine. The active-site Proton acceptor is the Lys173.

It belongs to the class I-like SAM-binding methyltransferase superfamily. RNA methyltransferase RlmE family.

It localises to the cytoplasm. The enzyme catalyses uridine(2552) in 23S rRNA + S-adenosyl-L-methionine = 2'-O-methyluridine(2552) in 23S rRNA + S-adenosyl-L-homocysteine + H(+). Its function is as follows. Specifically methylates the uridine in position 2552 of 23S rRNA at the 2'-O position of the ribose in the fully assembled 50S ribosomal subunit. This Acidovorax sp. (strain JS42) protein is Ribosomal RNA large subunit methyltransferase E.